The sequence spans 575 residues: Chaperonin 60 subunit alpha 2, chloroplastic (575 aa).

Residues 1–18 show a composition bias toward low complexity; sequence MFAVSPSSFSPTTISPRR. The interval 1–27 is disordered; it reads MFAVSPSSFSPTTISPRRSGQRNEPRK. A chloroplast-targeting transit peptide spans 1–32; sequence MFAVSPSSFSPTTISPRRSGQRNEPRKFSVVR.

It belongs to the chaperonin (HSP60) family. Part of the Cpn60 complex composed of 7 alpha and 7 beta subunits.

It is found in the plastid. Its subcellular location is the chloroplast. Its function is as follows. Involved in protein assisted folding. This Arabidopsis thaliana (Mouse-ear cress) protein is Chaperonin 60 subunit alpha 2, chloroplastic (CPN60A2).